Reading from the N-terminus, the 601-residue chain is Elongation factor 4 (601 aa).

The tr-type G domain maps to 6 to 188 (SHIRNFSIIA…QIVHRVPAPE (183 aa)). Residues 18-23 (DHGKST) and 135-138 (NKID) each bind GTP.

The protein belongs to the TRAFAC class translation factor GTPase superfamily. Classic translation factor GTPase family. LepA subfamily.

The protein resides in the cell inner membrane. It catalyses the reaction GTP + H2O = GDP + phosphate + H(+). Its function is as follows. Required for accurate and efficient protein synthesis under certain stress conditions. May act as a fidelity factor of the translation reaction, by catalyzing a one-codon backward translocation of tRNAs on improperly translocated ribosomes. Back-translocation proceeds from a post-translocation (POST) complex to a pre-translocation (PRE) complex, thus giving elongation factor G a second chance to translocate the tRNAs correctly. Binds to ribosomes in a GTP-dependent manner. This chain is Elongation factor 4, found in Anaeromyxobacter sp. (strain K).